The primary structure comprises 392 residues: Probable protein phosphatase 2C 78 (392 aa).

Positions 39–342 constitute a PPM-type phosphatase domain; the sequence is ASGEYSIAVA…DDITVVVVYL (304 aa). Mn(2+) is bound by residues D73, G74, D274, and D333.

It belongs to the PP2C family. Requires Mg(2+) as cofactor. It depends on Mn(2+) as a cofactor.

It carries out the reaction O-phospho-L-seryl-[protein] + H2O = L-seryl-[protein] + phosphate. The catalysed reaction is O-phospho-L-threonyl-[protein] + H2O = L-threonyl-[protein] + phosphate. The sequence is that of Probable protein phosphatase 2C 78 from Oryza sativa subsp. japonica (Rice).